A 201-amino-acid chain; its full sequence is Small ribosomal subunit protein uS4 (201 aa).

Residues 91–151 (SRLDNVVYRA…EKSQKMNWFE (61 aa)) enclose the S4 RNA-binding domain.

This sequence belongs to the universal ribosomal protein uS4 family. Part of the 30S ribosomal subunit. Contacts protein S5. The interaction surface between S4 and S5 is involved in control of translational fidelity.

Its function is as follows. One of the primary rRNA binding proteins, it binds directly to 16S rRNA where it nucleates assembly of the body of the 30S subunit. In terms of biological role, with S5 and S12 plays an important role in translational accuracy. In Corynebacterium glutamicum (strain ATCC 13032 / DSM 20300 / JCM 1318 / BCRC 11384 / CCUG 27702 / LMG 3730 / NBRC 12168 / NCIMB 10025 / NRRL B-2784 / 534), this protein is Small ribosomal subunit protein uS4.